Here is an 89-residue protein sequence, read N- to C-terminus: UPF0335 protein RPC_3979 (89 aa).

Belongs to the UPF0335 family.

The protein is UPF0335 protein RPC_3979 of Rhodopseudomonas palustris (strain BisB18).